Consider the following 360-residue polypeptide: MDSSNCKVIAPLLSQRYRRMVTKDGHSTLQMDGAQRGLAYLRDAWGILMDMRWRWMMLVFSASFVVHWLVFAVLWYVLAEMNGDLELDHDAPPENHTICVKYITSFTAAFSFSLETQLTIGYGTMFPSGDCPSAIALLAIQMLLGLMLEAFITGAFVAKIARPKNRAFSIRFTDTAVVAHMDGKPNLIFQVANTRPSPLTSVRVSAVLYQERENGKLYQTSVDFHLDGISSDECPFFIFPLTYYHSITPSSPLATLLQHENPSHFELVVFLSAMQEGTGEICQRRTSYLPSEIMLHHCFASLLTRGSKGEYQIKMENFDKTVPEFPTPLVSKSPNRTDLDIHINGQSIDNFQISETGLTE.

The Cytoplasmic segment spans residues 1 to 50 (MDSSNCKVIAPLLSQRYRRMVTKDGHSTLQMDGAQRGLAYLRDAWGILMD). The helical transmembrane segment at 51 to 77 (MRWRWMMLVFSASFVVHWLVFAVLWYV) threads the bilayer. Over 78 to 105 (LAEMNGDLELDHDAPPENHTICVKYITS) the chain is Extracellular. Positions 106–122 (FTAAFSFSLETQLTIGY) form an intramembrane region, helical; Pore-forming. The Selectivity filter motif lies at 119-124 (TIGYGT). At 123-131 (GTMFPSGDC) the chain is on the extracellular side. Residues 132–157 (PSAIALLAIQMLLGLMLEAFITGAFV) form a helical membrane-spanning segment. At 158–360 (AKIARPKNRA…FQISETGLTE (203 aa)) the chain is on the cytoplasmic side. Ser-201 bears the Phosphoserine; by PKC mark. At Ser-287 the chain carries Phosphoserine; by PKA.

Belongs to the inward rectifier-type potassium channel (TC 1.A.2.1) family. KCNJ13 subfamily. Homotetramer. Interacts with RAB28; the interaction may facilitate cone outer segments phagocytosis. In terms of processing, phosphorylation at Ser-201 by PKC strongly inhibits ionic currents, while phosphorylation at Ser-287 by PKA increases them. Predominantly expressed in small intestine. Expression is also detected in stomach, kidney, and all central nervous system regions tested with the exception of spinal cord.

The protein localises to the membrane. The protein resides in the cell membrane. The catalysed reaction is K(+)(in) = K(+)(out). With respect to regulation, inhibited by Ba(2+) and Cs(+), although sensitivity to those inhibitors is much lower than in other Kir channels. Inward rectifier potassium channels are characterized by a greater tendency to allow potassium to flow into the cell rather than out of it. Their voltage dependence is regulated by the concentration of extracellular potassium; as external potassium is raised, the voltage range of the channel opening shifts to more positive voltages. The inward rectification is mainly due to the blockage of outward current by internal magnesium. KCNJ13 has a very low single channel conductance, low sensitivity to block by external barium and cesium, and no dependence of its inward rectification properties on the internal blocking particle magnesium. This Homo sapiens (Human) protein is Inward rectifier potassium channel 13 (KCNJ13).